The chain runs to 492 residues: Serine/threonine-protein kinase 3 (492 aa).

One can recognise a Protein kinase domain in the interval 26–277 (FDVLEKLGEG…ATQLLQHPFI (252 aa)). ATP is bound by residues 32-40 (LGEGSYGSV) and lysine 55. The Proton acceptor role is filled by aspartate 145. At threonine 179 the chain carries Phosphothreonine; by autocatalysis. Coiled-coil stretches lie at residues 286–328 (LRDL…TMVK) and 443–476 (NLDFEELQMRLTALDPMMEREIEELRQRYTAKRQ). Residues 297–307 (KAKRQQEQQRE) are compositionally biased toward basic and acidic residues. A disordered region spans residues 297-339 (KAKRQQEQQRELEEDDENSEEEVEVDSHTMVKSGSESAGTMRA). Residues 308–320 (LEEDDENSEEEVE) show a composition bias toward acidic residues. The span at 326–339 (MVKSGSESAGTMRA) shows a compositional bias: polar residues. Positions 438-485 (FDFLKNLDFEELQMRLTALDPMMEREIEELRQRYTAKRQPILDAMDAK) constitute an SARAH domain.

It belongs to the protein kinase superfamily. STE Ser/Thr protein kinase family. STE20 subfamily. In terms of assembly, homodimer; mediated via the coiled-coil region. The cofactor is Mg(2+).

It localises to the cytoplasm. The protein resides in the nucleus. The catalysed reaction is L-seryl-[protein] + ATP = O-phospho-L-seryl-[protein] + ADP + H(+). It catalyses the reaction L-threonyl-[protein] + ATP = O-phospho-L-threonyl-[protein] + ADP + H(+). Inhibited by the C-terminal non-catalytic region. Activated by caspase-cleavage. Full activation also requires homodimerization and autophosphorylation of Thr-179. Stress-activated, pro-apoptotic kinase which, following caspase-cleavage, enters the nucleus and induces chromatin condensation followed by internucleosomal DNA fragmentation. Key component of the Hippo signaling pathway which plays a pivotal role in organ size control and tumor suppression by restricting proliferation and promoting apoptosis. The core of this pathway is composed of a kinase cascade wherein stk3/mst2 and stk4/mst1, in complex with its regulatory protein sav1, phosphorylates and activates lats1/2 in complex with its regulatory protein mob1, which in turn phosphorylates and inactivates yap1 oncoprotein and wwtr1/taz. Phosphorylation of yap1 by lats2 inhibits its translocation into the nucleus to regulate cellular genes important for cell proliferation, cell death, and cell migration. This chain is Serine/threonine-protein kinase 3 (stk3), found in Danio rerio (Zebrafish).